The sequence spans 378 residues: Histidinol-phosphate aminotransferase (378 aa).

The segment at 1-20 is disordered; it reads MSVSAKETQRHPARPEPRPG. A compositionally biased stretch (basic and acidic residues) spans 7–17; sequence ETQRHPARPEP. Lysine 232 is modified (N6-(pyridoxal phosphate)lysine).

Belongs to the class-II pyridoxal-phosphate-dependent aminotransferase family. Histidinol-phosphate aminotransferase subfamily. Homodimer. Pyridoxal 5'-phosphate is required as a cofactor.

It catalyses the reaction L-histidinol phosphate + 2-oxoglutarate = 3-(imidazol-4-yl)-2-oxopropyl phosphate + L-glutamate. It participates in amino-acid biosynthesis; L-histidine biosynthesis; L-histidine from 5-phospho-alpha-D-ribose 1-diphosphate: step 7/9. In Azorhizobium caulinodans (strain ATCC 43989 / DSM 5975 / JCM 20966 / LMG 6465 / NBRC 14845 / NCIMB 13405 / ORS 571), this protein is Histidinol-phosphate aminotransferase.